A 483-amino-acid polypeptide reads, in one-letter code: CdaA regulatory protein CdaR (483 aa).

A helical membrane pass occupies residues 9-26 (WAVKIIALLFALLLYVAV). 4 YbbR-like domains span residues 55-135 (IPVK…TVTI), 143-228 (FPVE…KITV), 237-316 (VPFK…TLHI), and 329-394 (VPIK…VNGP). The segment at 410 to 483 (LTSKKSNTST…STANSQSSSE (74 aa)) is disordered. Residues 413 to 430 (KKSNTSTNDNSSNTSGNQ) show a composition bias toward low complexity. The segment covering 431–454 (DTDKQTNDQKNNQQEDTKNTDKNN) has biased composition (basic and acidic residues).

In terms of assembly, interacts with CdaA.

The protein localises to the cell membrane. In terms of biological role, upon coexpression in E.coli stimulates the diadenylate cyclase activity of CdaA about 20-fold. In B.subtilis c-di-AMP is a second messenger that mediates growth, DNA repair and cell wall homeostasis; it is toxic when present in excess. The sequence is that of CdaA regulatory protein CdaR from Bacillus subtilis (strain 168).